The primary structure comprises 315 residues: NAD-dependent protein deacylase sirtuin-5, mitochondrial (315 aa).

The transit peptide at 1 to 39 directs the protein to the mitochondrion; that stretch reads MSLLHFATRRLILQVLRELGLKAPPVHKTLKICIAMSRP. The region spanning 40–312 is the Deacetylase sirtuin-type domain; the sequence is SSNMADFRRF…PEALSPHESE (273 aa). 61-80 is a binding site for NAD(+); that stretch reads GAGVSAESGVPTFRGPGGFW. Substrate contacts are provided by Tyr-105 and Arg-108. 143-146 serves as a coordination point for NAD(+); sequence QNID. The Proton acceptor role is filled by His-161. NAD(+) contacts are provided by residues 254–256, 280–282, and Cys-298; these read GTS and NTV.

It belongs to the sirtuin family. Class III subfamily. Monomer. Homodimer. Interacts with CPS1.

It is found in the mitochondrion. Its subcellular location is the cytoplasm. The protein resides in the cytosol. The protein localises to the nucleus. The enzyme catalyses N(6)-malonyl-L-lysyl-[protein] + NAD(+) + H2O = 2''-O-malonyl-ADP-D-ribose + nicotinamide + L-lysyl-[protein]. The catalysed reaction is N(6)-succinyl-L-lysyl-[protein] + NAD(+) + H2O = 2''-O-succinyl-ADP-D-ribose + nicotinamide + L-lysyl-[protein]. It catalyses the reaction N(6)-glutaryl-L-lysyl-[protein] + NAD(+) + H2O = 2''-O-glutaryl-ADP-D-ribose + nicotinamide + L-lysyl-[protein]. NAD-dependent lysine demalonylase, desuccinylase and deglutarylase that specifically removes malonyl, succinyl and glutaryl groups on target proteins. Activates CPS1 and contributes to the regulation of blood ammonia levels during prolonged fasting: acts by mediating desuccinylation and deglutarylation of CPS1, thereby increasing CPS1 activity in response to elevated NAD levels during fasting. Activates SOD1 by mediating its desuccinylation, leading to reduced reactive oxygen species. Activates SHMT2 by mediating its desuccinylation. Modulates ketogenesis through the desuccinylation and activation of HMGCS2. Has weak NAD-dependent protein deacetylase activity; however this activity may not be physiologically relevant in vivo. Can deacetylate cytochrome c (CYCS) and a number of other proteins in vitro such as UOX. In Monodelphis domestica (Gray short-tailed opossum), this protein is NAD-dependent protein deacylase sirtuin-5, mitochondrial.